The chain runs to 281 residues: 4-diphosphocytidyl-2-C-methyl-D-erythritol kinase (281 aa).

Residues Lys11 and Asp138 contribute to the active site.

This sequence belongs to the GHMP kinase family. IspE subfamily.

It catalyses the reaction 4-CDP-2-C-methyl-D-erythritol + ATP = 4-CDP-2-C-methyl-D-erythritol 2-phosphate + ADP + H(+). It functions in the pathway isoprenoid biosynthesis; isopentenyl diphosphate biosynthesis via DXP pathway; isopentenyl diphosphate from 1-deoxy-D-xylulose 5-phosphate: step 3/6. In terms of biological role, catalyzes the phosphorylation of the position 2 hydroxy group of 4-diphosphocytidyl-2C-methyl-D-erythritol. In Pelagibacter ubique (strain HTCC1062), this protein is 4-diphosphocytidyl-2-C-methyl-D-erythritol kinase.